The sequence spans 391 residues: Pectin acetylesterase 7 (391 aa).

The first 23 residues, M1 to A23, serve as a signal peptide directing secretion. Residues S171, D267, and H334 each act as charge relay system in the active site.

The protein belongs to the pectinacetylesterase family.

It localises to the secreted. The protein resides in the cell wall. Functionally, hydrolyzes acetyl esters in homogalacturonan regions of pectin. In type I primary cell wall, galacturonic acid residues of pectin can be acetylated at the O-2 and O-3 positions. Decreasing the degree of acetylation of pectin gels in vitro alters their physical properties. The protein is Pectin acetylesterase 7 of Arabidopsis thaliana (Mouse-ear cress).